Reading from the N-terminus, the 393-residue chain is CCA-adding enzyme (393 aa).

ATP-binding residues include G27 and R30. Residues G27 and R30 each coordinate CTP. Mg(2+) is bound by residues D40 and D42. ATP contacts are provided by R111, D154, R157, R160, and R163. CTP contacts are provided by R111, D154, R157, R160, and R163.

It belongs to the tRNA nucleotidyltransferase/poly(A) polymerase family. Bacterial CCA-adding enzyme type 3 subfamily. Homodimer. The cofactor is Mg(2+).

The catalysed reaction is a tRNA precursor + 2 CTP + ATP = a tRNA with a 3' CCA end + 3 diphosphate. It catalyses the reaction a tRNA with a 3' CCA end + 2 CTP + ATP = a tRNA with a 3' CCACCA end + 3 diphosphate. Its function is as follows. Catalyzes the addition and repair of the essential 3'-terminal CCA sequence in tRNAs without using a nucleic acid template. Adds these three nucleotides in the order of C, C, and A to the tRNA nucleotide-73, using CTP and ATP as substrates and producing inorganic pyrophosphate. tRNA 3'-terminal CCA addition is required both for tRNA processing and repair. Also involved in tRNA surveillance by mediating tandem CCA addition to generate a CCACCA at the 3' terminus of unstable tRNAs. While stable tRNAs receive only 3'-terminal CCA, unstable tRNAs are marked with CCACCA and rapidly degraded. This is CCA-adding enzyme from Listeria monocytogenes serotype 4a (strain HCC23).